The sequence spans 323 residues: Lipid A biosynthesis myristoyltransferase (323 aa).

Residues 23-43 (YWGAWLGVAAMAGIALTPPKF) traverse the membrane as a helical segment. The short motif at 139–144 (HGWAVD) is the HXXXXD motif element.

It belongs to the LpxL/LpxM/LpxP family. LpxM subfamily.

Its subcellular location is the cell inner membrane. It catalyses the reaction alpha-Kdo-(2-&gt;4)-alpha-Kdo-(2-&gt;6)-(dodecanoyl)-lipid IVA (E. coli) + tetradecanoyl-[ACP] = alpha-Kdo-(2-&gt;4)-alpha-Kdo-(2-&gt;6)-lipid A (E. coli) + holo-[ACP]. The enzyme catalyses (9Z)-hexadecenoyl-(Kdo)2-lipid IVA (E. coli) + tetradecanoyl-[ACP] = ((9Z)-hexadecenoyl-tetradecanoyl)-(Kdo)2-lipid A + holo-[ACP]. It functions in the pathway glycolipid biosynthesis; KDO(2)-lipid A biosynthesis; KDO(2)-lipid A from CMP-3-deoxy-D-manno-octulosonate and lipid IV(A): step 4/4. It participates in bacterial outer membrane biogenesis; lipopolysaccharide biosynthesis. Functionally, catalyzes the transfer of myristate from myristoyl-[acyl-carrier-protein] (ACP) to Kdo(2)-(lauroyl)-lipid IV(A) to form Kdo(2)-lipid A. Can probably also catalyze the transfer of myristate to Kdo(2)-(palmitoleoyl)-lipid IV(A) to form the cold-adapted Kdo(2)-lipid A. In vitro, can acylate Kdo(2)-lipid IV(A), but acylation of (KDO)2-(lauroyl)-lipid IV(A) is about 100 times faster. In vitro, can use lauroyl-ACP but displays a slight kinetic preference for myristoyl-ACP. This Escherichia coli (strain K12) protein is Lipid A biosynthesis myristoyltransferase.